The primary structure comprises 343 residues: 3-dehydroquinate synthase (343 aa).

NAD(+) is bound by residues 61–66, 95–99, 119–120, lysine 132, lysine 141, and 159–162; these read SGEKYK, GVISD, TT, and FLKT. 3 residues coordinate Zn(2+): glutamate 174, histidine 231, and histidine 248.

It belongs to the sugar phosphate cyclases superfamily. Dehydroquinate synthase family. Co(2+) is required as a cofactor. Requires Zn(2+) as cofactor. NAD(+) serves as cofactor.

It localises to the cytoplasm. The catalysed reaction is 7-phospho-2-dehydro-3-deoxy-D-arabino-heptonate = 3-dehydroquinate + phosphate. Its pathway is metabolic intermediate biosynthesis; chorismate biosynthesis; chorismate from D-erythrose 4-phosphate and phosphoenolpyruvate: step 2/7. Its function is as follows. Catalyzes the conversion of 3-deoxy-D-arabino-heptulosonate 7-phosphate (DAHP) to dehydroquinate (DHQ). This chain is 3-dehydroquinate synthase, found in Helicobacter pylori (strain G27).